Reading from the N-terminus, the 1006-residue chain is 5'-3' exoribonuclease 2 (1006 aa).

Coiled-coil stretches lie at residues 256 to 287 (FAQDNRKRNNLKDTINMTEEEKQFLQKQNSEQ) and 453 to 544 (RLKK…AESE). Residues 492-529 (DDAVSKANKTNFNLAEVMKQKIINKKHRLEKDNEEEEI) are required for retention in the nucleus. Residues 561–575 (DRENSETTEVSRDSP) are compositionally biased toward basic and acidic residues. Disordered regions lie at residues 561 to 584 (DRENSETTEVSRDSPVHSTVNVSE) and 939 to 1006 (HNYG…ANRR). Position 574 is a phosphoserine (Ser574). Over residues 939–956 (HNYGRNSYNSQPGFNNSR) the composition is skewed to polar residues. 6 repeat units span residues 955–958 (SRYD), 961–964 (NNNY), 972–974 (NNN), 975–978 (YSGN), 984–986 (YSG), and 996–999 (SRYD). The interval 955–999 (SRYDGGNNNYRQNSNYRNNNYSGNRNSGQYSGNSYSRNNKQSRYD) is 2 X 4 AA repeats of S-R-Y-D, N-N-N-Y, Y-S-G-N. Over residues 959-993 (GGNNNYRQNSNYRNNNYSGNRNSGQYSGNSYSRNN) the composition is skewed to low complexity. The segment covering 996–1006 (SRYDNSRANRR) has biased composition (basic and acidic residues).

This sequence belongs to the 5'-3' exonuclease family. XRN2/RAT1 subfamily. Interacts with RAI1 and RTT103. Mg(2+) is required as a cofactor. It depends on Mn(2+) as a cofactor.

The protein resides in the nucleus. With respect to regulation, inhibited by nucleoside 3', 5'-bisphosphates. Its function is as follows. Possesses 5'-&gt;3' exoribonuclease activity. Required for the processing of nuclear mRNA, rRNA and small nucleolar RNA (snoRNA) precursors. May promote termination of transcription by RNA polymerase II via the recruitment of 3'-end processing factors to the poly(A) site and by the degradation of nascent RNA downstream of the poly(A) site. This is 5'-3' exoribonuclease 2 (RAT1) from Saccharomyces cerevisiae (strain ATCC 204508 / S288c) (Baker's yeast).